Consider the following 78-residue polypeptide: Large ribosomal subunit protein bL28 (78 aa).

The protein belongs to the bacterial ribosomal protein bL28 family.

The polypeptide is Large ribosomal subunit protein bL28 (Francisella tularensis subsp. holarctica (strain FTNF002-00 / FTA)).